Here is a 517-residue protein sequence, read N- to C-terminus: Bifunctional purine biosynthesis protein PurH (517 aa).

An MGS-like domain is found at 1–145; it reads MSPLALVSVS…KNHKYVSVLV (145 aa).

This sequence belongs to the PurH family.

The enzyme catalyses (6R)-10-formyltetrahydrofolate + 5-amino-1-(5-phospho-beta-D-ribosyl)imidazole-4-carboxamide = 5-formamido-1-(5-phospho-D-ribosyl)imidazole-4-carboxamide + (6S)-5,6,7,8-tetrahydrofolate. The catalysed reaction is IMP + H2O = 5-formamido-1-(5-phospho-D-ribosyl)imidazole-4-carboxamide. It functions in the pathway purine metabolism; IMP biosynthesis via de novo pathway; 5-formamido-1-(5-phospho-D-ribosyl)imidazole-4-carboxamide from 5-amino-1-(5-phospho-D-ribosyl)imidazole-4-carboxamide (10-formyl THF route): step 1/1. Its pathway is purine metabolism; IMP biosynthesis via de novo pathway; IMP from 5-formamido-1-(5-phospho-D-ribosyl)imidazole-4-carboxamide: step 1/1. The polypeptide is Bifunctional purine biosynthesis protein PurH (Prochlorococcus marinus (strain MIT 9215)).